A 201-amino-acid polypeptide reads, in one-letter code: Small ribosomal subunit protein uS4 (201 aa).

One can recognise an S4 RNA-binding domain in the interval 91–157 (CRLDNVVYRA…TPFIIAKETI (67 aa)).

It belongs to the universal ribosomal protein uS4 family. In terms of assembly, part of the 30S ribosomal subunit. Contacts protein S5. The interaction surface between S4 and S5 is involved in control of translational fidelity.

One of the primary rRNA binding proteins, it binds directly to 16S rRNA where it nucleates assembly of the body of the 30S subunit. Functionally, with S5 and S12 plays an important role in translational accuracy. This is Small ribosomal subunit protein uS4 from Saccharopolyspora erythraea (strain ATCC 11635 / DSM 40517 / JCM 4748 / NBRC 13426 / NCIMB 8594 / NRRL 2338).